The primary structure comprises 426 residues: Hemojuvelin (426 aa).

The signal sequence occupies residues 1 to 35 (MGEPGQSPSPRSSHGSPPTLSTLTLLLLLCGHAHS). Residue tyrosine 46 is modified to Phosphotyrosine. The N-linked (GlcNAc...) asparagine glycan is linked to asparagine 118. The disordered stretch occupies residues 119–142 (CSRQGPTAPPPPRGPALPGAGSGL). Cystine bridges form between cysteine 148-cysteine 230 and cysteine 167-cysteine 317. Residues asparagine 213 and asparagine 372 are each glycosylated (N-linked (GlcNAc...) asparagine). Aspartate 400 carries GPI-anchor amidated aspartate lipidation. The propeptide at 401-426 (AGVPLSSATLLAPLLSGLFVLWLCIQ) is removed in mature form.

Belongs to the repulsive guidance molecule (RGM) family. As to quaternary structure, interacts with BMP2 and BMP4. Interacts with BMP6. Interacts with BMPR1B. Interacts with TMPRSS6. Autocatalytically cleaved at low pH; the two chains remain linked via two disulfide bonds. Also proteolytically processed by TMPRSS6, several fragments being released in the extracellular space; regulates HJV activity in BMP signaling and thefore iron homeostasis. As to expression, adult and fetal liver, heart, and skeletal muscle.

The protein localises to the cell membrane. In terms of biological role, acts as a bone morphogenetic protein (BMP) coreceptor. Through enhancement of BMP signaling regulates hepcidin (HAMP) expression and regulates iron homeostasis. The polypeptide is Hemojuvelin (Homo sapiens (Human)).